We begin with the raw amino-acid sequence, 467 residues long: Protein PHOSPHATE STARVATION RESPONSE 3 (467 aa).

Positions 227–266 (MSLPVSSCSDQEDLQDARSPAKVQLSSSRSSSGTASCNKP) are disordered. Residues 262-322 (SCNKPRLRWT…HLQKYRLAKY (61 aa)) enclose the HTH myb-type domain. Positions 293–318 (PKGVLKLMKVEGLTIYHIKSHLQKYR) form a DNA-binding region, H-T-H motif. A compositionally biased stretch (basic and acidic residues) spans 327 to 337 (KEDKKQEEKKT). Disordered regions lie at residues 327–353 (KEDKKQEEKKTKSVANGNDHAKKKSAQ) and 400–467 (RESI…VHDE). The span at 402-412 (SISSMTSTTEG) shows a compositional bias: polar residues. Basic and acidic residues-rich tracts occupy residues 419 to 428 (PMEKTEDKAE) and 438 to 467 (RITDTDAECHSKVDNKKTKPQADLEMVHDE).

As to expression, expressed in the root cap and in the exodermis of the root, in the root tip of lateral roots, in the mesophyll cells of the leaf, in pollen, vascular cylinder of the anther and the veins of the lemma, palea and pistils, and in the xylem and phloem regions of large vascular bundles, small vascular bundles and diffuse vascular bundles in node I.

It is found in the nucleus. Its function is as follows. Transcription factor involved in phosphate starvation signaling. Binds to P1BS, an imperfect palindromic sequence 5'-GNATATNC-3', to promote the expression of inorganic phosphate (Pi) starvation-responsive genes. Functionally redundant with PHR1 and PHR2 in regulating Pi starvation response and Pi homeostasis. This is Protein PHOSPHATE STARVATION RESPONSE 3 from Oryza sativa subsp. japonica (Rice).